The chain runs to 252 residues: Phosphoglycolate phosphatase (252 aa).

Aspartate 13 (nucleophile) is an active-site residue. Mg(2+) is bound by residues aspartate 13, aspartate 15, and aspartate 192.

Belongs to the HAD-like hydrolase superfamily. CbbY/CbbZ/Gph/YieH family. In terms of assembly, monomer. Requires Mg(2+) as cofactor. It depends on chloride as a cofactor.

It carries out the reaction 2-phosphoglycolate + H2O = glycolate + phosphate. It participates in organic acid metabolism; glycolate biosynthesis; glycolate from 2-phosphoglycolate: step 1/1. Functionally, specifically catalyzes the dephosphorylation of 2-phosphoglycolate. Is involved in the dissimilation of the intracellular 2-phosphoglycolate formed during the DNA repair of 3'-phosphoglycolate ends, a major class of DNA lesions induced by oxidative stress. This chain is Phosphoglycolate phosphatase, found in Shigella boydii serotype 4 (strain Sb227).